The following is a 1030-amino-acid chain: E3 ubiquitin-protein ligase mib1 (1030 aa).

In terms of domain architecture, MIB/HERC2 1 spans 6–74 (NNRVMMEGVG…AYDVRILDSA (69 aa)). The ZZ-type zinc finger occupies 80 to 132 (HDGTMCDTCRQQPIIGIRWKCAECTNYDLCTTCYHGDKHHLRHRFYRITTPGS). 8 residues coordinate Zn(2+): Cys85, Cys88, Cys100, Cys103, Cys109, Cys112, His118, and His122. The 79-residue stretch at 143 to 221 (SKKITARGIF…MSDLKCVQDA (79 aa)) folds into the MIB/HERC2 2 domain. ANK repeat units lie at residues 430 to 460 (DINE…DVNG), 463 to 492 (AGHT…DLEA), 496 to 525 (DGDR…DLNA), 529 to 558 (RRQT…HPSL), 562 to 591 (EGDT…DVTI), 595 to 627 (NGFN…IVDE), 631 to 661 (DGYT…NLDV), 665 to 694 (NQQT…KLDV), and 698 to 727 (DGDT…VSKV). RING-type zinc fingers lie at residues 817-852 (CMVC…LICK) and 864-899 (CVVC…VQCR). Positions 957–986 (ALQRDKDNTNVNADVQKLQQQLQDIKEQTM) form a coiled coil. The RING-type 3 zinc-finger motif lies at 987-1020 (CPVCLDRLKNMIFMCGHGTCQLCGDRMSECPICR).

As to quaternary structure, interacts with deltaA (dla) and deltaD (dld).

The protein localises to the cytoplasm. It localises to the cytoskeleton. It is found in the microtubule organizing center. Its subcellular location is the centrosome. The protein resides in the centriolar satellite. The protein localises to the cell membrane. It catalyses the reaction S-ubiquitinyl-[E2 ubiquitin-conjugating enzyme]-L-cysteine + [acceptor protein]-L-lysine = [E2 ubiquitin-conjugating enzyme]-L-cysteine + N(6)-ubiquitinyl-[acceptor protein]-L-lysine.. Its pathway is protein modification; protein ubiquitination. Its function is as follows. E3 ubiquitin-protein ligase that mediates ubiquitination of Delta receptors, which act as ligands of Notch proteins. Positively regulates the Delta-mediated Notch signaling by ubiquitinating the intracellular domain of Delta, leading to endocytosis of Delta receptors. It thereby participates in many processes regulated by the Notch signaling pathway, such as midline cell fate specification prior to germ layer formation, patterning of sensory cell differentiation in the ear, neurogenesis of the hindbrain and commitment to a secretory fate in the intestine. Essential for early embryonic development. In Danio rerio (Zebrafish), this protein is E3 ubiquitin-protein ligase mib1 (mib1).